The following is a 333-amino-acid chain: Holliday junction branch migration complex subunit RuvB (333 aa).

Positions 1 to 181 (MARILDNDLL…FGINGHMEYY (181 aa)) are large ATPase domain (RuvB-L). Residues Leu20, Arg21, Gly62, Lys65, Thr66, Thr67, 128-130 (EDY), Arg171, Tyr181, and Arg218 each bind ATP. Thr66 contacts Mg(2+). Residues 130–148 (YYIDIMIGAGETSRSVHLD) are presensor-1 beta-hairpin. The interval 182–252 (ELPDLTEIVE…IADQALTMLD (71 aa)) is small ATPAse domain (RuvB-S). The tract at residues 255–333 (HEGLDYVDQK…HMGYDYTRDN (79 aa)) is head domain (RuvB-H). DNA is bound by residues Arg291, Arg310, Arg312, and Arg315.

This sequence belongs to the RuvB family. As to quaternary structure, homohexamer. Forms an RuvA(8)-RuvB(12)-Holliday junction (HJ) complex. HJ DNA is sandwiched between 2 RuvA tetramers; dsDNA enters through RuvA and exits via RuvB. Only 4 subunits contact one DNA strand at any time. Two adjacent subunits are contacted by domain III of RuvA. An RuvB hexamer assembles on each DNA strand where it exits the tetramer. Each RuvB hexamer is contacted by two RuvA subunits (via domain III) on 2 adjacent RuvB subunits; this complex drives branch migration. In the full resolvosome a probable DNA-RuvA(4)-RuvB(12)-RuvC(2) complex forms which resolves the HJ.

The protein resides in the cytoplasm. The catalysed reaction is ATP + H2O = ADP + phosphate + H(+). With respect to regulation, binding of domain III of RuvA to a single subunit of the RuvB hexamer activates the ATPase 2 subunits away and nucleotide exchange in the adjacent subunit. Functionally, the RuvA-RuvB-RuvC complex processes Holliday junction (HJ) DNA during genetic recombination and DNA repair, while the RuvA-RuvB complex plays an important role in the rescue of blocked DNA replication forks via replication fork reversal (RFR). Catalyzes branch migration on Holliday junction (HJ) DNA in complex with RuvA from S.typhimurim and ATP. RuvA specifically binds to HJ cruciform DNA, conferring on it an open structure. The RuvB hexamer acts as an ATP-dependent pump, pulling dsDNA into and through the RuvAB complex. Forms 2 homohexamers on either side of HJ DNA bound by 1 or 2 RuvA tetramers; 4 subunits per hexamer contact DNA at a time. Coordinated motions by a converter formed by DNA-disengaged RuvB subunits stimulates ATP hydrolysis and nucleotide exchange. Immobilization of the converter enables RuvB to convert the ATP-contained energy into a lever motion, pulling 2 nucleotides of DNA out of the RuvA tetramer per ATP hydrolyzed, thus driving DNA branch migration. The RuvB motors rotate together with the DNA substrate, which together with the progressing nucleotide cycle forms the mechanistic basis for DNA recombination by continuous branch migration. Branch migration allows RuvC to scan DNA until it finds its consensus sequence, where it cleaves and resolves cruciform DNA. The polypeptide is Holliday junction branch migration complex subunit RuvB (Streptococcus thermophilus (strain ATCC BAA-250 / LMG 18311)).